The sequence spans 541 residues: 1'-carboxy-chondrochloren decarboxylase (541 aa).

Positions 39–226 (TTHRIPAIIS…TRMTIWLAPR (188 aa)) constitute an FAD-binding PCMH-type domain.

The catalysed reaction is 1'-carboxy-chondrochloren A + FAD + 2 H(+) = chondrochloren A + FADH2 + CO2. The enzyme catalyses 1'-carboxy-chondrochloren B + FAD + 2 H(+) = chondrochloren B + FADH2 + CO2. It functions in the pathway antibiotic biosynthesis. Activity is not affected by the addition of EDTA or/and EGTA chelators or in the presence of external metals like Zn(2+), Mg(2+), Mn(2+) and Fe(2+). Activity is inhibited under low oxygen conditions. Functionally, oxidative decarboxylase involved in the biosynthesis of the antibiotics chondrochloren A and chondrochloren B. Catalyzes the decarboxylation of biologically inactive pre-chondrochloren A and pre-chondrochloren B to yield mature chondrochloren A and chondrochloren B, respectively. Cannot decarboxylate free L-tyrosine, 3-chloro-tyrosine or a number of chlorinated and non-chlorinated analog substrates containing variable N-acyl chains. This Chondromyces crocatus protein is 1'-carboxy-chondrochloren decarboxylase.